The following is a 204-amino-acid chain: MPSFLRGILKPKERHHENKNHSQVSSDSLTSSYPTSPPKLEKTEAGSMVSSTTQKKTSHHAKPTITTKTEQSQRRPKIIDQVRRVESLGEQVSQKQRHMLDSLINKVYTGPLGEELVQTLYLRIWAMKETPESMKILQMREDIRDQYLRMKTERWLRTLIRGKKTKLRDFQKRYEEVHPYLMMERVEQIIMEEAWKLAAHIVQE.

A disordered region spans residues 1–78; sequence MPSFLRGILK…TEQSQRRPKI (78 aa). The segment covering 10–20 has biased composition (basic and acidic residues); that stretch reads KPKERHHENKN. The span at 25 to 34 shows a compositional bias: low complexity; the sequence is SSDSLTSSYP.

Belongs to the respirovirus protein C family.

This Homo sapiens (Human) protein is Protein C (P/V/C).